Reading from the N-terminus, the 26-residue chain is Histone H2B.1, sperm (26 aa).

The interval 1-26 is disordered; the sequence is MPSQKSPTKRSPTKRSPQKGGKGAKR. 3 short sequence motifs (SPKK motif) span residues 6–9, 11–14, and 16–19; these read SPTK and SPQK. A compositionally biased stretch (basic residues) spans 7–26; it reads PTKRSPTKRSPQKGGKGAKR. 2 positions are modified to phosphoserine: S11 and S16.

This sequence belongs to the histone H2B family. In terms of assembly, the nucleosome is a histone octamer containing two molecules each of H2A, H2B, H3 and H4 assembled in one H3-H4 heterotetramer and two H2A-H2B heterodimers. The octamer wraps approximately 147 bp of DNA. Post-translationally, monoubiquitination gives a specific tag for epigenetic transcriptional activation and is also prerequisite for histone H3 'Lys-4' and 'Lys-79' methylation. In terms of processing, phosphorylated on SPKK motifs 2 and 3; which may regulate DNA binding. Dephosphorylated during maturation of spermatids to mature sperm and rephosphorylated at fertilization.

Its subcellular location is the nucleus. It is found in the chromosome. In terms of biological role, core component of nucleosome. Nucleosomes wrap and compact DNA into chromatin, limiting DNA accessibility to the cellular machineries which require DNA as a template. Histones thereby play a central role in transcription regulation, DNA repair, DNA replication and chromosomal stability. DNA accessibility is regulated via a complex set of post-translational modifications of histones, also called histone code, and nucleosome remodeling. This chain is Histone H2B.1, sperm, found in Echinus esculentus (Sea urchin).